The following is a 121-amino-acid chain: Large ribosomal subunit protein uL14 (121 aa).

Belongs to the universal ribosomal protein uL14 family. Part of the 50S ribosomal subunit. Forms a cluster with proteins L3 and L19. In the 70S ribosome, L14 and L19 interact and together make contacts with the 16S rRNA in bridges B5 and B8.

Its function is as follows. Binds to 23S rRNA. Forms part of two intersubunit bridges in the 70S ribosome. This Parasynechococcus marenigrum (strain WH8102) protein is Large ribosomal subunit protein uL14.